A 257-amino-acid chain; its full sequence is Coenzyme F420:L-glutamate ligase (257 aa).

Residues Val-9–Val-12, Ser-38–Thr-39, and Lys-43 contribute to the GTP site. Asp-113 lines the a divalent metal cation pocket. Asn-116 lines the GTP pocket. Residues Asp-154, Thr-155, and Glu-212 each contribute to the a divalent metal cation site. Thr-210 to Thr-217 is a binding site for GTP.

Belongs to the CofE family. As to quaternary structure, homodimer. It depends on Mg(2+) as a cofactor. Mn(2+) is required as a cofactor. The cofactor is K(+).

It catalyses the reaction oxidized coenzyme F420-0 + GTP + L-glutamate = oxidized coenzyme F420-1 + GDP + phosphate + H(+). The enzyme catalyses oxidized coenzyme F420-1 + GTP + L-glutamate = oxidized coenzyme F420-2 + GDP + phosphate + H(+). It functions in the pathway cofactor biosynthesis; coenzyme F420 biosynthesis. Functionally, catalyzes the GTP-dependent successive addition of two or more gamma-linked L-glutamates to the L-lactyl phosphodiester of 7,8-didemethyl-8-hydroxy-5-deazariboflavin (F420-0) to form coenzyme F420-0-glutamyl-glutamate (F420-2) or polyglutamated F420 derivatives. The chain is Coenzyme F420:L-glutamate ligase from Haloarcula marismortui (strain ATCC 43049 / DSM 3752 / JCM 8966 / VKM B-1809) (Halobacterium marismortui).